The sequence spans 398 residues: Acetate kinase (398 aa).

Residue N10 coordinates Mg(2+). K17 provides a ligand contact to ATP. R91 serves as a coordination point for substrate. D148 serves as the catalytic Proton donor/acceptor. ATP contacts are provided by residues 208–212, 283–285, and 331–335; these read HLGNG, DCR, and GIGEN. E385 serves as a coordination point for Mg(2+).

Belongs to the acetokinase family. As to quaternary structure, homodimer. Requires Mg(2+) as cofactor. Mn(2+) is required as a cofactor.

It localises to the cytoplasm. It catalyses the reaction acetate + ATP = acetyl phosphate + ADP. It functions in the pathway metabolic intermediate biosynthesis; acetyl-CoA biosynthesis; acetyl-CoA from acetate: step 1/2. In terms of biological role, catalyzes the formation of acetyl phosphate from acetate and ATP. Can also catalyze the reverse reaction. The polypeptide is Acetate kinase (Shewanella pealeana (strain ATCC 700345 / ANG-SQ1)).